Consider the following 796-residue polypeptide: Lon protease (796 aa).

The Lon N-terminal domain occupies leucine 19 to proline 213. Position 376–383 (glycine 376–threonine 383) interacts with ATP. Residues glutamate 612–asparagine 793 form the Lon proteolytic domain. Active-site residues include serine 699 and lysine 742.

This sequence belongs to the peptidase S16 family. As to quaternary structure, homohexamer. Organized in a ring with a central cavity.

Its subcellular location is the cytoplasm. The catalysed reaction is Hydrolysis of proteins in presence of ATP.. ATP-dependent serine protease that mediates the selective degradation of mutant and abnormal proteins as well as certain short-lived regulatory proteins. Required for cellular homeostasis and for survival from DNA damage and developmental changes induced by stress. Degrades polypeptides processively to yield small peptide fragments that are 5 to 10 amino acids long. Binds to DNA in a double-stranded, site-specific manner. The polypeptide is Lon protease (Mycoplasma mycoides subsp. mycoides SC (strain CCUG 32753 / NCTC 10114 / PG1)).